Reading from the N-terminus, the 838-residue chain is Probable beta-glucosidase I (838 aa).

Residues Asn-57 and Asn-197 are each glycosylated (N-linked (GlcNAc...) asparagine). Asp-225 is an active-site residue. The region spanning 395–555 is the PA14 domain; that stretch reads EGEKGFKFRV…GQEELISKAA (161 aa). A glycan (N-linked (GlcNAc...) asparagine) is linked at Asn-493.

Belongs to the glycosyl hydrolase 3 family.

Its subcellular location is the secreted. It catalyses the reaction Hydrolysis of terminal, non-reducing beta-D-glucosyl residues with release of beta-D-glucose.. Its pathway is glycan metabolism; cellulose degradation. Its function is as follows. Beta-glucosidases are one of a number of cellulolytic enzymes involved in the degradation of cellulosic biomass. Catalyzes the last step releasing glucose from the inhibitory cellobiose. The sequence is that of Probable beta-glucosidase I (bglI) from Aspergillus clavatus (strain ATCC 1007 / CBS 513.65 / DSM 816 / NCTC 3887 / NRRL 1 / QM 1276 / 107).